A 3371-amino-acid polypeptide reads, in one-letter code: Protocadherin-23 (3371 aa).

A disordered region spans residues 1–40 (MSPCGRKMGEGRQQRRAPVGKLLLLPGRRDTPHGRSGSSG). The Cytoplasmic segment spans residues 1–46 (MSPCGRKMGEGRQQRRAPVGKLLLLPGRRDTPHGRSGSSGARTQRS). The helical transmembrane segment at 47–67 (LLWLLVHVWLWAASGSSAQLF) threads the bilayer. 27 Cadherin domains span residues 65–167 (QLFN…SPRF), 168–296 (PLDS…PPVF), 297–413 (EQDE…RPAI), 424–539 (ARVS…PPLF), 540–663 (SQQH…EPIF), 664–771 (WRQV…HPVF), 772–881 (NPST…RPKY), 877–979 (ERPK…HPAF), 980–1082 (LRTS…SPSW), 1085–1191 (EHLV…SPTF), 1192–1294 (LHDV…RPFF), 1299–1415 (PGKE…IPEN), 1404–1510 (SQNI…SPSF), 1511–1620 (QDEL…NPTF), 1620–1724 (FISF…APVF), 1725–1829 (KQHL…APEF), 1830–1933 (IVSS…SPSF), 1934–2038 (PTLY…DPVL), 2039–2130 (EQNP…VIHM), 2140–2242 (SHHL…SPCF), 2243–2347 (EQSI…APAF), 2347–2447 (FLPS…PPVF), 2448–2549 (SQDF…APEF), 2550–2665 (TVKS…PPNF), 2666–2769 (SSLS…APQF), 2770–2880 (MFSS…EPIF), and 2881–2988 (TQDQ…TPLA). Residues 68 to 2986 (NLTLSVDEGL…NVSFSSEGTP (2919 aa)) lie on the Extracellular side of the membrane. Asn669, Asn772, Asn814, Asn905, Asn966, Asn1038, Asn1172, and Asn1275 each carry an N-linked (GlcNAc...) asparagine glycan. Residues Asn1487, Asn1595, Asn1617, and Asn1664 are each glycosylated (N-linked (GlcNAc...) asparagine). Asn1898 carries N-linked (GlcNAc...) asparagine glycosylation. 3 N-linked (GlcNAc...) asparagine glycosylation sites follow: Asn2054, Asn2070, and Asn2098. An N-linked (GlcNAc...) asparagine glycan is attached at Asn2329. Residues Asn2479, Asn2497, Asn2555, and Asn2664 are each glycosylated (N-linked (GlcNAc...) asparagine). N-linked (GlcNAc...) asparagine glycans are attached at residues Asn2929 and Asn2977. Residues 2987-3017 (LAVFASSFSISLVVSFLVFLILICILIVMIL) form a helical membrane-spanning segment. The Cytoplasmic segment spans residues 3018-3371 (RHKQKDTINN…ELKAEDEVQI (354 aa)). Residues 3117 to 3140 (KCSDSALSDHESRVPDSGIPRDSD) show a composition bias toward basic and acidic residues. A disordered region spans residues 3117 to 3141 (KCSDSALSDHESRVPDSGIPRDSDQ).

Cerebral cortex and testis.

The protein resides in the membrane. Functionally, calcium-dependent cell-adhesion protein. The chain is Protocadherin-23 (DCHS2) from Homo sapiens (Human).